The sequence spans 349 residues: Histidinol-phosphate aminotransferase (349 aa).

Position 206 is an N6-(pyridoxal phosphate)lysine (lysine 206).

This sequence belongs to the class-II pyridoxal-phosphate-dependent aminotransferase family. Histidinol-phosphate aminotransferase subfamily. Homodimer. Pyridoxal 5'-phosphate is required as a cofactor.

It catalyses the reaction L-histidinol phosphate + 2-oxoglutarate = 3-(imidazol-4-yl)-2-oxopropyl phosphate + L-glutamate. The protein operates within amino-acid biosynthesis; L-histidine biosynthesis; L-histidine from 5-phospho-alpha-D-ribose 1-diphosphate: step 7/9. This Hydrogenobaculum sp. (strain Y04AAS1) protein is Histidinol-phosphate aminotransferase.